We begin with the raw amino-acid sequence, 410 residues long: MKVAFETLGCRMNQFDTDLLKNKFIQKGYEVVSFEDMADVYVINTCTVTVGGDRSSRQAIYQAKRRNPKAIVVATGCYAQVNPQELAKLKEVDLVVGNTHKSELLKILEEYLERREKKVVVGEIFREKEVRNFDTVLYFEGVRPFLKVQEGCNKFCTFCVIPYARGKVRSVDLEKIVHQVKLLAQKGFKEVVLTGTQLSQYGWDKGYNLYTLLTELIKIEGIELIRLSSMHIKEMDKELLKLIVSEEKIAPHFHLSLQSGSNRILELMDRGYTREEYEEVVNFIVENRPISSIGTDVIVGFPTESEEDFQETYEFLKRIPISYMHIFPYSDRPFTKASKLKPKLPERIKKERVRILKELDQKKRQEFYEKNKGKELRALVIEENRLLTENYIDIKREGYKEVGKLVRVLI.

An MTTase N-terminal domain is found at 1–113; the sequence is MKVAFETLGC…LLKILEEYLE (113 aa). Residues C10, C46, C77, C152, C156, and C159 each coordinate [4Fe-4S] cluster. Positions 138-366 constitute a Radical SAM core domain; it reads YFEGVRPFLK…KELDQKKRQE (229 aa).

This sequence belongs to the methylthiotransferase family. MtaB subfamily. The cofactor is [4Fe-4S] cluster.

It localises to the cytoplasm. It catalyses the reaction N(6)-L-threonylcarbamoyladenosine(37) in tRNA + (sulfur carrier)-SH + AH2 + 2 S-adenosyl-L-methionine = 2-methylsulfanyl-N(6)-L-threonylcarbamoyladenosine(37) in tRNA + (sulfur carrier)-H + 5'-deoxyadenosine + L-methionine + A + S-adenosyl-L-homocysteine + 2 H(+). Catalyzes the methylthiolation of N6-threonylcarbamoyladenosine (t(6)A), leading to the formation of 2-methylthio-N6-threonylcarbamoyladenosine (ms(2)t(6)A) at position 37 in tRNAs that read codons beginning with adenine. In Aquifex aeolicus (strain VF5), this protein is Threonylcarbamoyladenosine tRNA methylthiotransferase MtaB (mtaB).